The sequence spans 90 residues: Putative F-box protein At5g16285 (90 aa).

The region spanning 1–46 is the F-box domain; the sequence is MRIESLLQHDVVERILERLAVNSLPRFKAVSKQWKSTIESQFFQGK.

This chain is Putative F-box protein At5g16285, found in Arabidopsis thaliana (Mouse-ear cress).